A 79-amino-acid polypeptide reads, in one-letter code: Small ribosomal subunit protein uS17 (79 aa).

This sequence belongs to the universal ribosomal protein uS17 family. As to quaternary structure, part of the 30S ribosomal subunit.

One of the primary rRNA binding proteins, it binds specifically to the 5'-end of 16S ribosomal RNA. The sequence is that of Small ribosomal subunit protein uS17 from Rhizobium leguminosarum bv. trifolii (strain WSM2304).